A 152-amino-acid chain; its full sequence is Methylglyoxal synthase (152 aa).

Positions 5–152 constitute an MGS-like domain; that stretch reads TRTVQAQKHI…YQLYLQQRLK (148 aa). Residues His19, Lys23, 45 to 48, and 65 to 66 each bind substrate; these read TGTT and SG. Catalysis depends on Asp71, which acts as the Proton donor/acceptor. His98 provides a ligand contact to substrate.

The protein belongs to the methylglyoxal synthase family.

The catalysed reaction is dihydroxyacetone phosphate = methylglyoxal + phosphate. Catalyzes the formation of methylglyoxal from dihydroxyacetone phosphate. This chain is Methylglyoxal synthase, found in Erwinia tasmaniensis (strain DSM 17950 / CFBP 7177 / CIP 109463 / NCPPB 4357 / Et1/99).